We begin with the raw amino-acid sequence, 320 residues long: Protein TsetseEP (320 aa).

A signal peptide spans 1–19; sequence MKFFISFAFLCLVLSCVAA. The disordered stretch occupies residues 192-320; that stretch reads GLPEPEPEPE…ESKPNSLFNF (129 aa). Acidic residues predominate over residues 194 to 308; it reads PEPEPEPEPE…EPEPEPEPQP (115 aa). The 59 X 2 AA tandem repeats of P-E stretch occupies residues 194 to 311; that stretch reads PEPEPEPEPE…PEPEPQPEPE (118 aa).

As to expression, expressed in the gut, but not salivary glands, of female and male flies (at protein level). Present in vesicles in midgut cells and in the lumen of the gut.

The protein resides in the secreted. The protein is Protein TsetseEP of Glossina morsitans morsitans (Savannah tsetse fly).